Consider the following 471-residue polypeptide: Protein naked cuticle homolog 1 (471 aa).

Disordered stretches follow at residues 1–23 (MGKL…GDSF) and 41–82 (QRCP…DEDD). The N-myristoyl glycine moiety is linked to residue G2. The segment covering 62–75 (GTRELVGDTSREAL) has biased composition (basic and acidic residues). The interval 125-190 (QCDVSVEEDS…LRVKLTVAPD (66 aa)) is interaction with DVL1, DVL2 and DVL3. In terms of domain architecture, EF-hand spans 131-166 (EEDSRQEWTFTLYDFDNNGKVTREDITSLLHTIYEV). Ca(2+) contacts are provided by D144, D146, N148, K150, and D155. 3 disordered regions span residues 273-314 (GPGS…QGVD), 337-382 (GTQD…SPSA), and 448-471 (QAVQ…FYQP). The segment covering 453 to 471 (HEHHHHHEHHHHYHHFYQP) has biased composition (basic residues).

It belongs to the NKD family. As to quaternary structure, interacts with DVL1, DVL2, DVL3 and PPP2R3A. Highly expressed in lung. Also expressed in brain, heart, kidney, liver, skin, stomach and testis. Within the testis expression is found in the seminiferous epithelium and round and elongating spermatids.

It is found in the cell membrane. The protein resides in the cytoplasm. Cell autonomous antagonist of the canonical Wnt signaling pathway. May activate a second Wnt signaling pathway that controls planar cell polarity. Required for spermatogenesis. The polypeptide is Protein naked cuticle homolog 1 (Nkd1) (Mus musculus (Mouse)).